Consider the following 249-residue polypeptide: Neurotrophic factor BDNF precursor form (249 aa).

Positions 1–18 are cleaved as a signal peptide; it reads MTILFLTMVISYFGCMKA. Residues 19-130 constitute a propeptide that is removed on maturation; sequence APMKEVNVHG…AANMSMRVRR (112 aa). N-linked (GlcNAc...) asparagine glycosylation occurs at N123. 3 disulfide bridges follow: C143–C210, C188–C239, and C198–C241.

This sequence belongs to the NGF-beta family. As to quaternary structure, monomers and homodimers. Binds to NTRK2/TRKB. Can form heterodimers with other neurotrophin family members, such as NTF3 and NTF4 (in vitro), but the physiological relevance of this is not clear. BDNF precursor form: interacts with the heterodimer formed by NGFR and SORCS2. Mature BDNF has much lower affinity for the heterodimer formed by NGFR and SORCS2. Post-translationally, N-glycosylated and glycosulfated, contrary to mature BDNF. Mature BDNF is produced by proteolytic removal of the propeptide, catalyzed by a FURIN family member. In addition, the precursor form is proteolytically cleaved within the propeptide, but this is not an obligatory intermediate for the production of mature BDNF. Can be converted into mature BDNF by plasmin (PLG). Expressed in the dorsal root ganglion and the spinal cord (at protein level). Detected in brain, especially in brain cortex, hippocampus, midbrain and cerebellum.

It localises to the secreted. Its function is as follows. Important signaling molecule that activates signaling cascades downstream of NTRK2. During development, promotes the survival and differentiation of selected neuronal populations of the peripheral and central nervous systems. Participates in axonal growth, pathfinding and in the modulation of dendritic growth and morphology. Major regulator of synaptic transmission and plasticity at adult synapses in many regions of the CNS. The versatility of BDNF is emphasized by its contribution to a range of adaptive neuronal responses including long-term potentiation (LTP), long-term depression (LTD), certain forms of short-term synaptic plasticity, as well as homeostatic regulation of intrinsic neuronal excitability. Functionally, important signaling molecule that activates signaling cascades downstream of NTRK2. Activates signaling cascades via the heterodimeric receptor formed by NGFR and SORCS2. Signaling via NGFR and SORCS2 plays a role in synaptic plasticity and long-term depression (LTD). Binding to NGFR and SORCS2 promotes neuronal apoptosis. Promotes neuronal growth cone collapse. The polypeptide is Neurotrophic factor BDNF precursor form (Bdnf) (Mus musculus (Mouse)).